Here is a 240-residue protein sequence, read N- to C-terminus: Probable transcriptional regulatory protein jhp_0149 (240 aa).

It belongs to the TACO1 family.

It localises to the cytoplasm. This Helicobacter pylori (strain J99 / ATCC 700824) (Campylobacter pylori J99) protein is Probable transcriptional regulatory protein jhp_0149.